We begin with the raw amino-acid sequence, 289 residues long: Nucleotide-binding protein CHY_0272 (289 aa).

8–15 (GLSGAGKT) provides a ligand contact to ATP. 59-62 (DVRG) contributes to the GTP binding site.

This sequence belongs to the RapZ-like family.

Displays ATPase and GTPase activities. The protein is Nucleotide-binding protein CHY_0272 of Carboxydothermus hydrogenoformans (strain ATCC BAA-161 / DSM 6008 / Z-2901).